We begin with the raw amino-acid sequence, 249 residues long: Carboxy-S-adenosyl-L-methionine synthase (249 aa).

S-adenosyl-L-methionine-binding positions include Tyr39, 64-66 (GCS), 117-118 (DI), Asn132, and Arg199.

The protein belongs to the class I-like SAM-binding methyltransferase superfamily. Cx-SAM synthase family. As to quaternary structure, homodimer.

It carries out the reaction prephenate + S-adenosyl-L-methionine = carboxy-S-adenosyl-L-methionine + 3-phenylpyruvate + H2O. Catalyzes the conversion of S-adenosyl-L-methionine (SAM) to carboxy-S-adenosyl-L-methionine (Cx-SAM). This is Carboxy-S-adenosyl-L-methionine synthase from Aeromonas hydrophila subsp. hydrophila (strain ATCC 7966 / DSM 30187 / BCRC 13018 / CCUG 14551 / JCM 1027 / KCTC 2358 / NCIMB 9240 / NCTC 8049).